The primary structure comprises 391 residues: Stearoyl-[acyl-carrier-protein] 9-desaturase 5, chloroplastic (391 aa).

Residues 1 to 20 form a disordered region; the sequence is MAFAPSHTASPSYCGVAQGG. Residues 1–32 constitute a chloroplast transit peptide; sequence MAFAPSHTASPSYCGVAQGGRRSNGMSPVVAM. 6 residues coordinate Fe cation: Glu133, Glu171, His174, Glu224, Glu257, and His260.

The protein belongs to the fatty acid desaturase type 2 family. In terms of assembly, homodimer. Fe(2+) is required as a cofactor.

Its subcellular location is the plastid. The protein resides in the chloroplast. The catalysed reaction is octadecanoyl-[ACP] + 2 reduced [2Fe-2S]-[ferredoxin] + O2 + 2 H(+) = (9Z)-octadecenoyl-[ACP] + 2 oxidized [2Fe-2S]-[ferredoxin] + 2 H2O. Its pathway is lipid metabolism; fatty acid metabolism. In terms of biological role, converts stearoyl-ACP to oleoyl-ACP by introduction of a cis double bond between carbons 9 and 10 of the acyl chain. This chain is Stearoyl-[acyl-carrier-protein] 9-desaturase 5, chloroplastic, found in Oryza sativa subsp. indica (Rice).